Consider the following 500-residue polypeptide: Probable glycine dehydrogenase (decarboxylating) subunit 2 (500 aa).

An N6-(pyridoxal phosphate)lysine modification is found at K273.

The protein belongs to the GcvP family. C-terminal subunit subfamily. In terms of assembly, the glycine cleavage system is composed of four proteins: P, T, L and H. In this organism, the P 'protein' is a heterodimer of two subunits. Pyridoxal 5'-phosphate is required as a cofactor.

It catalyses the reaction N(6)-[(R)-lipoyl]-L-lysyl-[glycine-cleavage complex H protein] + glycine + H(+) = N(6)-[(R)-S(8)-aminomethyldihydrolipoyl]-L-lysyl-[glycine-cleavage complex H protein] + CO2. In terms of biological role, the glycine cleavage system catalyzes the degradation of glycine. The P protein binds the alpha-amino group of glycine through its pyridoxal phosphate cofactor; CO(2) is released and the remaining methylamine moiety is then transferred to the lipoamide cofactor of the H protein. The sequence is that of Probable glycine dehydrogenase (decarboxylating) subunit 2 from Rhodopirellula baltica (strain DSM 10527 / NCIMB 13988 / SH1).